A 92-amino-acid polypeptide reads, in one-letter code: C-C motif chemokine 22 (92 aa).

The N-terminal stretch at M1 to A24 is a signal peptide. Disulfide bonds link C36-C60 and C37-C76.

This sequence belongs to the intercrine beta (chemokine CC) family. Expressed by activated splenic B-lymphocytes and dendritic cells. Low expression in lung, thymocytes, lymph node, and unstimulated splenic cells.

The protein resides in the secreted. In terms of biological role, chemotactic for activated T-lymphocytes. May play an important role in the collaboration of dendritic cells and B-lymphocytes with T-cells in immune responses. This Mus musculus (Mouse) protein is C-C motif chemokine 22 (Ccl22).